A 641-amino-acid polypeptide reads, in one-letter code: Phosphomethylpyrimidine synthase (641 aa).

Substrate is bound by residues asparagine 221, methionine 250, tyrosine 279, histidine 315, 335–337 (SRG), 376–379 (DGLR), and glutamate 415. Histidine 419 contributes to the Zn(2+) binding site. Tyrosine 442 provides a ligand contact to substrate. Histidine 483 lines the Zn(2+) pocket. [4Fe-4S] cluster contacts are provided by cysteine 563, cysteine 566, and cysteine 571.

Belongs to the ThiC family. Homodimer. Requires [4Fe-4S] cluster as cofactor.

It carries out the reaction 5-amino-1-(5-phospho-beta-D-ribosyl)imidazole + S-adenosyl-L-methionine = 4-amino-2-methyl-5-(phosphooxymethyl)pyrimidine + CO + 5'-deoxyadenosine + formate + L-methionine + 3 H(+). The protein operates within cofactor biosynthesis; thiamine diphosphate biosynthesis. Functionally, catalyzes the synthesis of the hydroxymethylpyrimidine phosphate (HMP-P) moiety of thiamine from aminoimidazole ribotide (AIR) in a radical S-adenosyl-L-methionine (SAM)-dependent reaction. This is Phosphomethylpyrimidine synthase from Rhodopseudomonas palustris (strain TIE-1).